The primary structure comprises 289 residues: MDFSKGHGTENDFVVLPDPDVRIDLSAPRVAALCDRRRGLGADGILRVAKAGALAAAGVLAELPDGTSEDDWFMDYRNADGSIAEMCGNGVRVFAHYLRSTGLETRDEFVVGSRAGGKPVIVHSADGSAGEVTVDMGVVRDLGTSAATIDGKVFNGIGIDVGNPHLACVDAHLTAASLSALDLTAAPGFDPGFFPHGVNVEILTRIDSGAVDMRVHERGVGETRSCGTGTVAAATAALRFDGADSGEVKVRIPGGQVTVALSGGRATLRGPSVLVASGNLDDSWWNGLS.

Substrate contacts are provided by asparagine 11 and asparagine 78. Catalysis depends on cysteine 87, which acts as the Proton donor. Residues 88–89 (GN), asparagine 163, asparagine 199, and 217–218 (ER) each bind substrate. Cysteine 226 serves as the catalytic Proton acceptor. Residue 227–228 (GT) participates in substrate binding.

This sequence belongs to the diaminopimelate epimerase family. In terms of assembly, homodimer.

Its subcellular location is the cytoplasm. The catalysed reaction is (2S,6S)-2,6-diaminopimelate = meso-2,6-diaminopimelate. It participates in amino-acid biosynthesis; L-lysine biosynthesis via DAP pathway; DL-2,6-diaminopimelate from LL-2,6-diaminopimelate: step 1/1. Functionally, catalyzes the stereoinversion of LL-2,6-diaminopimelate (L,L-DAP) to meso-diaminopimelate (meso-DAP), a precursor of L-lysine and an essential component of the bacterial peptidoglycan. The protein is Diaminopimelate epimerase of Rhodococcus opacus (strain B4).